Consider the following 266-residue polypeptide: Elongation factor Ts (266 aa).

The segment at 80-83 (TDFV) is involved in Mg(2+) ion dislocation from EF-Tu.

The protein belongs to the EF-Ts family.

Its subcellular location is the cytoplasm. Associates with the EF-Tu.GDP complex and induces the exchange of GDP to GTP. It remains bound to the aminoacyl-tRNA.EF-Tu.GTP complex up to the GTP hydrolysis stage on the ribosome. This Buchnera aphidicola subsp. Baizongia pistaciae (strain Bp) protein is Elongation factor Ts.